We begin with the raw amino-acid sequence, 970 residues long: Testis anion transporter 1 (970 aa).

Over 1 to 95 (MAQLERSAIS…YRLKDWLLGD (95 aa)) the chain is Cytoplasmic. The chain crosses the membrane as a helical span at residues 96–116 (LLAGISVGLVQVPQGLTLSLL). Residues 117–119 (ARQ) lie on the Extracellular side of the membrane. Residues 120–140 (LIPPLNIAYAAFCSSVIYVIF) traverse the membrane as a helical segment. At 141-146 (GSCHQM) the chain is on the cytoplasmic side. The helical transmembrane segment at 147 to 167 (SIGSFFLVSALLINVLKVSPF) threads the bilayer. Topologically, residues 168–202 (NNGQLVMGSFVKNEFSAPSYLMGYNKSLSVVATTT) are extracellular. N192 is a glycosylation site (N-linked (GlcNAc...) asparagine). Residues 203–223 (FLTGIIQLIMGVLGLGFIATY) traverse the membrane as a helical segment. Topologically, residues 224–232 (LPESAMSAY) are cytoplasmic. A helical membrane pass occupies residues 233–253 (LAAVALHIMLSQLTFIFGIMI). The Extracellular portion of the chain corresponds to 254 to 270 (SFHAGPISFFYDIINYC). Residues 271–291 (VALPKANSTSILVFLTVVVAL) traverse the membrane as a helical segment. The Cytoplasmic segment spans residues 292–307 (RINKCIRISFNQYPIE). The helical transmembrane segment at 308–328 (FPMELFLIIGFTVIANKISMA) threads the bilayer. The Extracellular segment spans residues 329-355 (TETSQTLIDMIPYSFLLPVTPDFSLLP). The chain crosses the membrane as a helical span at residues 356 to 376 (KIILQAFSLSLVSSFLLIFLG). Topologically, residues 377-392 (KKIASLHNYSVNSNQD) are cytoplasmic. The chain crosses the membrane as a helical span at residues 393–413 (LIAIGLCNVVSSFFRSCVFTG). The Extracellular segment spans residues 414–429 (AIARTIIQDKSGGRQQ). The chain crosses the membrane as a helical span at residues 430–450 (FASLVGAGVMLLLMVKMGHFF). Over 451–452 (YT) the chain is Cytoplasmic. The helical transmembrane segment at 453–473 (LPNAVLAGIILSNVIPYLETI) threads the bilayer. Topologically, residues 474–497 (SNLPSLWRQDQYDCALWMMTFSSS) are extracellular. The helical transmembrane segment at 498 to 518 (IFLGLDIGLIISVVSAFFITT) threads the bilayer. At 519–970 (VRSHRAKILL…SPEGNSNEDV (452 aa)) the chain is on the cytoplasmic side. The region spanning 543-795 (DYREIITIPG…LSVHDAVLFA (253 aa)) is the STAS domain. The interaction with RACGAP1 stretch occupies residues 664–970 (TVSSVSQKNQ…SPEGNSNEDV (307 aa)). A compositionally biased stretch (acidic residues) spans 858–868 (SELDLELESEQ). Residues 858–970 (SELDLELESE…SPEGNSNEDV (113 aa)) form a disordered region. A compositionally biased stretch (basic and acidic residues) spans 877–898 (DLDRELEPEMEPKAETETKTQT). The span at 938 to 948 (STQSQTQTRTW) shows a compositional bias: low complexity.

Belongs to the SLC26A/SulP transporter (TC 2.A.53) family. In terms of assembly, interacts with RACGAP1. Interacts with CFTR; stimulates anion transport activity of CFTR. Post-translationally, N-glycosylated. In terms of tissue distribution, expression observed exclusively in testis, restricted to the meiotic phase of the germ cell. Abundant expression located in the seminiferous tubules, concentrated on the luminal side of the tubuli harboring the spermatocytes and spermatids.

It localises to the membrane. The catalysed reaction is sulfate(out) + chloride(in) = sulfate(in) + chloride(out). The enzyme catalyses oxalate(in) + chloride(out) = oxalate(out) + chloride(in). With respect to regulation, activity is inhibited by 4,4'-Di-isothiocyanatostilbene-2,2'-disulfonic acid (DIDS - an inhibitor of several anion channels and transporters) and gluconate. Functionally, antiporter that mediates the exchange of sulfate and oxalate against chloride ions across a membrane. Stimulates anion transport activity of CFTR. May cooperate with CFTR in the regulation of chloride and bicarbonate ions fluxes required for activation of the ADCY10/PKA pathway during sperm motility and sperm capacitation. May play a role in sperm tail differentiation and motility and hence male fertility. In Homo sapiens (Human), this protein is Testis anion transporter 1.